A 153-amino-acid chain; its full sequence is MAVLVNNLQEEISVEENLLKLVESVVKVSLESEGYSPDAEVGLIFVDDNYIRSLNAEYRGIDKATDVLSFALNEGEEMPEEEEAEDLLGDIVISLPTAQRQAAEYGHSFNREVAYLTAHGSLHLLGYDHMTEEDRQVMRQKEEGILERLGINR.

3 residues coordinate Zn(2+): histidine 119, histidine 123, and histidine 129.

This sequence belongs to the endoribonuclease YbeY family. Zn(2+) is required as a cofactor.

The protein resides in the cytoplasm. Functionally, single strand-specific metallo-endoribonuclease involved in late-stage 70S ribosome quality control and in maturation of the 3' terminus of the 16S rRNA. This is Endoribonuclease YbeY from Desulforamulus reducens (strain ATCC BAA-1160 / DSM 100696 / MI-1) (Desulfotomaculum reducens).